Consider the following 315-residue polypeptide: Zinc finger transcription factor ref-2 (315 aa).

Residues 83 to 112 form a C2H2-type 1; atypical zinc finger; that stretch reads VQCLWETNGQVCMHVCQNSGELSTHISSNH. The C2H2-type 2; degenerate zinc-finger motif lies at 124-146; the sequence is KGCDREFKMFKAKYKLVNHMRVH. C2H2-type zinc fingers lie at residues 152–174, 180–204, and 210–234; these read FLCDVCNKVFARSENLKIHKRIH, FQCTHNGCTKLFANSSDRKKHMHVH, and YSCMYPDCGKTYTHPSSLRKHTKVH. The segment at 225–270 is disordered; it reads SSLRKHTKVHENEKKSQLSPEHDESSDSGNASIGTPTTDESLTFSP. Over residues 233 to 249 the composition is skewed to basic and acidic residues; the sequence is VHENEKKSQLSPEHDES. Polar residues predominate over residues 251 to 270; the sequence is DSGNASIGTPTTDESLTFSP.

As to quaternary structure, interacts with TCF transcription factor pop-1; the interaction is direct and facilitates transcriptional activation; transcription may be repressed by beta-catenin/sys-1.

The protein localises to the nucleus. The protein resides in the cytoplasm. Transcription factor. Modulates expression of target genes by binding to regulatory elements. Required for normal cell division timing and cell positioning in anterior lineages, acting in a cell-autonomous manner. Required for development, fusion and fate of cells of the ventral epidermis, the Pn.p cells, during larval development; acts in concert with homeobox genes lin-39 and mab-5. Required for the specification of the AIY interneuron. In complex with TCF transcription factor pop-1, positively modulates expression of LIM/homeobox protein ttx-3 in anterior daughter cells of the SMDD/AIY neuron lineage. The polypeptide is Zinc finger transcription factor ref-2 (Caenorhabditis elegans).